We begin with the raw amino-acid sequence, 422 residues long: Exopolygalacturonase clone GBGE184 (422 aa).

An N-terminal signal peptide occupies residues 1–31; the sequence is MANARSLVAKANNINVGSLILMALVFGSCVA. PbH1 repeat units follow at residues 200–226, 227–248, 250–270, 280–301, and 310–331; these read TENVNIQNIKLTAPAESPNTDGIHLSN, ADNVSILDSTIATGDDCVSVGR, SNNVTVERVICGPGHGLSVGS, VSGIHVNNCTMIETDNGLRIKT, and AVDIKFENIIMQSVKNPIIIDQ. Asn229 carries N-linked (GlcNAc...) asparagine glycosylation. The active-site Proton donor is Asp241. A disulfide bond links Cys243 and Cys260. Asn252 carries an N-linked (GlcNAc...) asparagine glycan. His264 is a catalytic residue. Asn287 carries N-linked (GlcNAc...) asparagine glycosylation. Disulfide bonds link Cys366–Cys372 and Cys404–Cys420.

Belongs to the glycosyl hydrolase 28 family.

The protein localises to the secreted. It is found in the cell wall. The enzyme catalyses [(1-&gt;4)-alpha-D-galacturonosyl](n) + H2O = alpha-D-galacturonate + [(1-&gt;4)-alpha-D-galacturonosyl](n-1). Its function is as follows. May function in depolymerizing pectin during pollen development, germination, and tube growth. Acts as an exo-polygalacturonase. The chain is Exopolygalacturonase clone GBGE184 (PGA3) from Arabidopsis thaliana (Mouse-ear cress).